Consider the following 160-residue polypeptide: Small ribosomal subunit protein uS19 (160 aa).

This sequence belongs to the universal ribosomal protein uS19 family.

Protein S19 forms a complex with S13 that binds strongly to the 16S ribosomal RNA. In Pyrobaculum islandicum (strain DSM 4184 / JCM 9189 / GEO3), this protein is Small ribosomal subunit protein uS19.